A 67-amino-acid polypeptide reads, in one-letter code: DNA-directed RNA polymerase subunit omega (67 aa).

The protein belongs to the RNA polymerase subunit omega family. In terms of assembly, the RNAP catalytic core consists of 2 alpha, 1 beta, 1 beta' and 1 omega subunit. When a sigma factor is associated with the core the holoenzyme is formed, which can initiate transcription.

The catalysed reaction is RNA(n) + a ribonucleoside 5'-triphosphate = RNA(n+1) + diphosphate. In terms of biological role, promotes RNA polymerase assembly. Latches the N- and C-terminal regions of the beta' subunit thereby facilitating its interaction with the beta and alpha subunits. This is DNA-directed RNA polymerase subunit omega from Burkholderia ambifaria (strain MC40-6).